We begin with the raw amino-acid sequence, 490 residues long: Cobyric acid synthase (490 aa).

Positions 252–439 (RLKVVVPVLP…LHGLFESTAA (188 aa)) constitute a GATase cobBQ-type domain. The active-site Nucleophile is cysteine 333. Residue histidine 431 is part of the active site.

Belongs to the CobB/CobQ family. CobQ subfamily.

It functions in the pathway cofactor biosynthesis; adenosylcobalamin biosynthesis. Its function is as follows. Catalyzes amidations at positions B, D, E, and G on adenosylcobyrinic A,C-diamide. NH(2) groups are provided by glutamine, and one molecule of ATP is hydrogenolyzed for each amidation. In Pseudomonas paraeruginosa (strain DSM 24068 / PA7) (Pseudomonas aeruginosa (strain PA7)), this protein is Cobyric acid synthase.